Here is a 991-residue protein sequence, read N- to C-terminus: 5'-3' exoribonuclease 2 (991 aa).

The short motif at 264–268 (TKKTK) is the Nuclear localization signal element. Residues 404-418 (RRNENYRRRQQRESN) are compositionally biased toward basic and acidic residues. Disordered stretches follow at residues 404–461 (RRNE…TQKI), 547–582 (SIESSTPVVHPIDTKVSNVGQKRKAPDSTEENENTD), and 872–991 (AERS…NGYY). A compositionally biased stretch (low complexity) spans 433–452 (SVETQSTEVVTSSKSTSVDT). 2 stretches are compositionally biased toward low complexity: residues 878-889 (SRRNNGNSYRGG) and 896-910 (RRSYQSQSYSSRQSY). Polar residues predominate over residues 926–938 (WSGNGNFPRSNAS). Residues 946 to 958 (EGYGGRSRGGGYS) are compositionally biased toward gly residues. Polar residues predominate over residues 980-991 (ESYNNNNRNGYY).

It belongs to the 5'-3' exonuclease family. XRN2/RAT1 subfamily. As to quaternary structure, interacts with din1/rai1; the interaction is direct, stabilizes dhp1 protein structure and may stimulate its exoribonuclease activity. The interaction also stimulates din1 pyrophosphohydrolase activity, probably by recruiting it to mRNA substrates.

It is found in the nucleus. Functionally, possesses 5'-&gt;3' exoribonuclease activity. Required for the processing of nuclear mRNA and rRNA precursors. May promote the termination of transcription by RNA polymerase II. Essential for vegetative cell growth and chromosome segregation. This chain is 5'-3' exoribonuclease 2 (dhp1), found in Schizosaccharomyces pombe (strain 972 / ATCC 24843) (Fission yeast).